We begin with the raw amino-acid sequence, 136 residues long: MRVLNFVLTTTVVLLTSSEGIASSPQVRHIKPNVAIDHLSIRSLRATENPGSDESRLNEKDTGFDPDGSSSKEDEDIGEPTFWEKVRFRYWKTMGKTPGDLRKEYFEGMDEAVIKNNPNYKLVQQYEVYYDEKSSE.

The signal sequence occupies residues 1 to 22 (MRVLNFVLTTTVVLLTSSEGIA). The RxLR-dEER motif lies at 42–56 (RSLRATENPGSDESR). The disordered stretch occupies residues 42–78 (RSLRATENPGSDESRLNEKDTGFDPDGSSSKEDEDIG). Residues 53 to 63 (DESRLNEKDTG) show a composition bias toward basic and acidic residues.

The protein belongs to the RxLR effector family.

It is found in the secreted. Its subcellular location is the host cytoplasm. The protein localises to the host nucleus. Its function is as follows. Effector that acts as a broad suppressor of cell death to interrupt plant immunity. Inhibits cell death induced by cell death-inducing proteins, including the PAMP elicitor INF1 from P.infestans. The sequence is that of Secreted RxLR effector protein 10 from Plasmopara viticola (Downy mildew of grapevine).